The following is a 245-amino-acid chain: Protein crossbronx (245 aa).

The region spanning 20-177 (HQEYKILAEY…VQESIAESKA (158 aa)) is the UBC core domain.

It belongs to the ubiquitin-conjugating enzyme family. FTS subfamily.

This is Protein crossbronx (cbx) from Drosophila mojavensis (Fruit fly).